Reading from the N-terminus, the 474-residue chain is Cysteine--tRNA ligase (474 aa).

Cys-27 provides a ligand contact to Zn(2+). Residues 29–39 carry the 'HIGH' region motif; it reads PTVYNYIHIGN. The Zn(2+) site is built by Cys-212, His-237, and Glu-241. The 'KMSKS' region signature appears at 271 to 275; that stretch reads KMSKS. Lys-274 contacts ATP.

Belongs to the class-I aminoacyl-tRNA synthetase family. In terms of assembly, monomer. It depends on Zn(2+) as a cofactor.

The protein resides in the cytoplasm. It catalyses the reaction tRNA(Cys) + L-cysteine + ATP = L-cysteinyl-tRNA(Cys) + AMP + diphosphate. This Lactobacillus delbrueckii subsp. bulgaricus (strain ATCC 11842 / DSM 20081 / BCRC 10696 / JCM 1002 / NBRC 13953 / NCIMB 11778 / NCTC 12712 / WDCM 00102 / Lb 14) protein is Cysteine--tRNA ligase.